The sequence spans 212 residues: Ribonuclease HII (212 aa).

Residues 28-212 enclose the RNase H type-2 domain; sequence SIIAGVDEVG…KSFAPIRQVV (185 aa). 3 residues coordinate a divalent metal cation: Asp-34, Glu-35, and Asp-127.

It belongs to the RNase HII family. The cofactor is Mn(2+). It depends on Mg(2+) as a cofactor.

It is found in the cytoplasm. It carries out the reaction Endonucleolytic cleavage to 5'-phosphomonoester.. Functionally, endonuclease that specifically degrades the RNA of RNA-DNA hybrids. The sequence is that of Ribonuclease HII from Chlamydia caviae (strain ATCC VR-813 / DSM 19441 / 03DC25 / GPIC) (Chlamydophila caviae).